Reading from the N-terminus, the 189-residue chain is Lipid A acyltransferase PagP (189 aa).

The signal sequence occupies residues methionine 1–alanine 24. Catalysis depends on residues histidine 61, aspartate 104, and serine 105.

It belongs to the lipid A palmitoyltransferase family. In terms of assembly, homodimer.

It is found in the cell outer membrane. The enzyme catalyses a lipid A + a 1,2-diacyl-sn-glycero-3-phosphocholine = a hepta-acyl lipid A + a 2-acyl-sn-glycero-3-phosphocholine. The catalysed reaction is a lipid IVA + a 1,2-diacyl-sn-glycero-3-phosphocholine = a lipid IVB + a 2-acyl-sn-glycero-3-phosphocholine. It catalyses the reaction a lipid IIA + a 1,2-diacyl-sn-glycero-3-phosphocholine = a lipid IIB + a 2-acyl-sn-glycero-3-phosphocholine. In terms of biological role, transfers a fatty acid residue from the sn-1 position of a phospholipid to the N-linked hydroxyfatty acid chain on the proximal unit of lipid A or its precursors. The sequence is that of Lipid A acyltransferase PagP from Klebsiella pneumoniae subsp. pneumoniae (strain ATCC 700721 / MGH 78578).